A 161-amino-acid polypeptide reads, in one-letter code: Regulator of ribonuclease activity A (161 aa).

Belongs to the RraA family. In terms of assembly, homotrimer. Binds to both RNA-binding sites in the C-terminal region of Rne and to RhlB.

It localises to the cytoplasm. Globally modulates RNA abundance by binding to RNase E (Rne) and regulating its endonucleolytic activity. Can modulate Rne action in a substrate-dependent manner by altering the composition of the degradosome. Modulates RNA-binding and helicase activities of the degradosome. This chain is Regulator of ribonuclease activity A, found in Citrobacter koseri (strain ATCC BAA-895 / CDC 4225-83 / SGSC4696).